Reading from the N-terminus, the 955-residue chain is Bifunctional glutamine synthetase adenylyltransferase/adenylyl-removing enzyme (955 aa).

The interval 1 to 458 (MTAQAPLSVA…QFEQTFSDKQ (458 aa)) is adenylyl removase. The segment at 464–955 (CAAIWHADLL…GSIDAASPTP (492 aa)) is adenylyl transferase.

The protein belongs to the GlnE family. The cofactor is Mg(2+).

It carries out the reaction [glutamine synthetase]-O(4)-(5'-adenylyl)-L-tyrosine + phosphate = [glutamine synthetase]-L-tyrosine + ADP. The enzyme catalyses [glutamine synthetase]-L-tyrosine + ATP = [glutamine synthetase]-O(4)-(5'-adenylyl)-L-tyrosine + diphosphate. In terms of biological role, involved in the regulation of glutamine synthetase GlnA, a key enzyme in the process to assimilate ammonia. When cellular nitrogen levels are high, the C-terminal adenylyl transferase (AT) inactivates GlnA by covalent transfer of an adenylyl group from ATP to specific tyrosine residue of GlnA, thus reducing its activity. Conversely, when nitrogen levels are low, the N-terminal adenylyl removase (AR) activates GlnA by removing the adenylyl group by phosphorolysis, increasing its activity. The regulatory region of GlnE binds the signal transduction protein PII (GlnB) which indicates the nitrogen status of the cell. The polypeptide is Bifunctional glutamine synthetase adenylyltransferase/adenylyl-removing enzyme (Ralstonia nicotianae (strain ATCC BAA-1114 / GMI1000) (Ralstonia solanacearum)).